Here is a 154-residue protein sequence, read N- to C-terminus: Endoribonuclease YbeY (154 aa).

The Zn(2+) site is built by His114, His118, and His124.

The protein belongs to the endoribonuclease YbeY family. Zn(2+) is required as a cofactor.

The protein resides in the cytoplasm. In terms of biological role, single strand-specific metallo-endoribonuclease involved in late-stage 70S ribosome quality control and in maturation of the 3' terminus of the 16S rRNA. This chain is Endoribonuclease YbeY, found in Haemophilus influenzae (strain 86-028NP).